The primary structure comprises 345 residues: Trans-3-hydroxy-L-proline dehydratase (345 aa).

Ser-90 (proton acceptor) is an active-site residue. Substrate is bound by residues 91–92 (GS), Asp-252, and 257–258 (GT).

This sequence belongs to the proline racemase family.

The catalysed reaction is trans-3-hydroxy-L-proline = 1-pyrroline-2-carboxylate + H2O. In terms of biological role, catalyzes the dehydration of trans-3-hydroxy-L-proline (t3LHyp) to Delta(1)-pyrroline-2-carboxylate (Pyr2C). May be involved in a degradation pathway that converts t3LHyp to L-proline, which would allow S.novella to grow on t3LHyp as a sole carbon source. The protein is Trans-3-hydroxy-L-proline dehydratase of Ancylobacter novellus (strain ATCC 8093 / DSM 506 / JCM 20403 / CCM 1077 / IAM 12100 / NBRC 12443 / NCIMB 10456) (Starkeya novella).